The primary structure comprises 136 residues: Large ribosomal subunit protein uL22 (136 aa).

The protein belongs to the universal ribosomal protein uL22 family. As to quaternary structure, part of the 50S ribosomal subunit.

In terms of biological role, this protein binds specifically to 23S rRNA; its binding is stimulated by other ribosomal proteins, e.g. L4, L17, and L20. It is important during the early stages of 50S assembly. It makes multiple contacts with different domains of the 23S rRNA in the assembled 50S subunit and ribosome. The globular domain of the protein is located near the polypeptide exit tunnel on the outside of the subunit, while an extended beta-hairpin is found that lines the wall of the exit tunnel in the center of the 70S ribosome. The polypeptide is Large ribosomal subunit protein uL22 (Bacteroides fragilis (strain ATCC 25285 / DSM 2151 / CCUG 4856 / JCM 11019 / LMG 10263 / NCTC 9343 / Onslow / VPI 2553 / EN-2)).